Consider the following 363-residue polypeptide: Protein-arginine kinase (363 aa).

The Phosphagen kinase C-terminal domain maps to 24-254 (IVLSSRIRLA…AQLIEQERSA (231 aa)). 27–31 (SSRIR) serves as a coordination point for ATP. Phosphoarginine; by autocatalysis is present on residues R29, R40, and R86. ATP is bound by residues H92, R125, and 176 to 180 (RASVM). Phosphoarginine; by autocatalysis is present on R190. An ATP-binding site is contributed by 207-212 (RGIYGE). Phosphoarginine; by autocatalysis is present on residues R255, R269, and R272. Residues 337–342 (RDIRRA) carry the RDXXRA motif of the pArg binding pocket involved in allosteric regulation motif. A Phosphoarginine; by autocatalysis modification is found at R346.

This sequence belongs to the ATP:guanido phosphotransferase family. Interacts with CtsR in its autophosphorylated form. Interacts with McsA in nonstressed as well as in heat-stressed cells, whereas strongly interacts with ClpC only in nonstressed cells. Post-translationally, autophosphorylated on Arg residues. Phosphorylation on Arg-40 and Arg-86 are up-regulated upon stress conditions.

The protein resides in the cytoplasm. It catalyses the reaction L-arginyl-[protein] + ATP = N(omega)-phospho-L-arginyl-[protein] + ADP + H(+). Appears to be allosterically activated by the binding of pArg-containing polypeptides to the pArg-binding pocket localized in the C-terminal domain of McsB. The McsB kinase is inhibited in nonstressed cells by direct interaction with ClpC; upon heat exposure, the interaction of McsB with ClpC is dramatically decreased, leading to McsB release and activation during heat stress. Its kinase activity is counteracted by the protein-arginine-phosphatase YwlE in vivo. Requires McsA for full kinase activity. Functionally, catalyzes the specific phosphorylation of arginine residues in a large number of proteins. Is part of the bacterial stress response system, where it is involved in regulating the global heat shock repressor CtsR; phosphorylates arginine residues in the winged helix-turn-helix domain of CtsR, thereby preventing its binding to DNA and consequently inducing the expression of repressed genes. The transcriptional repressor HrcA, the chaperone GroEL, the unfoldase ClpC, together with several ribosomal subunits, represent other physiological targets of McsB under stress conditions. Protein arginine phosphorylation has a physiologically important role and is involved in the regulation of many critical cellular processes, such as protein homeostasis, motility, competence, and stringent and stress responses, by regulating gene expression and protein activity. Functions as an adapter whose kinase activity is required for ClpCP-mediated degradation of CtsR during heat stress. Is required for the delocalization of competence proteins from the cell poles, probably via a role in the degradation of anchor proteins. This chain is Protein-arginine kinase, found in Bacillus subtilis (strain 168).